A 440-amino-acid polypeptide reads, in one-letter code: tRNA(Ile)-lysidine synthase (440 aa).

Ser25–Ser30 provides a ligand contact to ATP.

Belongs to the tRNA(Ile)-lysidine synthase family.

The protein resides in the cytoplasm. The catalysed reaction is cytidine(34) in tRNA(Ile2) + L-lysine + ATP = lysidine(34) in tRNA(Ile2) + AMP + diphosphate + H(+). Its function is as follows. Ligates lysine onto the cytidine present at position 34 of the AUA codon-specific tRNA(Ile) that contains the anticodon CAU, in an ATP-dependent manner. Cytidine is converted to lysidine, thus changing the amino acid specificity of the tRNA from methionine to isoleucine. This is tRNA(Ile)-lysidine synthase from Vibrio cholerae serotype O1 (strain ATCC 39541 / Classical Ogawa 395 / O395).